The chain runs to 296 residues: tRNA dimethylallyltransferase (296 aa).

Glycine 11–threonine 18 lines the ATP pocket. Threonine 13–threonine 18 is a substrate binding site. Positions aspartate 36 to glutamine 39 are interaction with substrate tRNA.

The protein belongs to the IPP transferase family. As to quaternary structure, monomer. The cofactor is Mg(2+).

The enzyme catalyses adenosine(37) in tRNA + dimethylallyl diphosphate = N(6)-dimethylallyladenosine(37) in tRNA + diphosphate. Functionally, catalyzes the transfer of a dimethylallyl group onto the adenine at position 37 in tRNAs that read codons beginning with uridine, leading to the formation of N6-(dimethylallyl)adenosine (i(6)A). This is tRNA dimethylallyltransferase from Streptococcus agalactiae serotype Ia (strain ATCC 27591 / A909 / CDC SS700).